A 239-amino-acid polypeptide reads, in one-letter code: 2,3,4,5-tetrahydropyridine-2,6-dicarboxylate N-acetyltransferase (239 aa).

Belongs to the transferase hexapeptide repeat family. DapH subfamily.

It carries out the reaction (S)-2,3,4,5-tetrahydrodipicolinate + acetyl-CoA + H2O = L-2-acetamido-6-oxoheptanedioate + CoA. Its pathway is amino-acid biosynthesis; L-lysine biosynthesis via DAP pathway; LL-2,6-diaminopimelate from (S)-tetrahydrodipicolinate (acetylase route): step 1/3. Functionally, catalyzes the transfer of an acetyl group from acetyl-CoA to tetrahydrodipicolinate. The chain is 2,3,4,5-tetrahydropyridine-2,6-dicarboxylate N-acetyltransferase from Staphylococcus haemolyticus (strain JCSC1435).